The following is a 257-amino-acid chain: tRNA pseudouridine synthase A (257 aa).

Aspartate 43 (nucleophile) is an active-site residue. Tyrosine 94 provides a ligand contact to substrate.

It belongs to the tRNA pseudouridine synthase TruA family.

The enzyme catalyses uridine(38/39/40) in tRNA = pseudouridine(38/39/40) in tRNA. Formation of pseudouridine at positions 38, 39 and 40 in the anticodon stem and loop of transfer RNAs. The polypeptide is tRNA pseudouridine synthase A (Pyrobaculum arsenaticum (strain DSM 13514 / JCM 11321 / PZ6)).